We begin with the raw amino-acid sequence, 665 residues long: E3 ubiquitin-protein ligase cblA (665 aa).

Positions 30 to 50 (NNNNNINNNNNNNNINSNNNG) are disordered. Positions 109–231 (TSLVNYIHYE…NNENNNNNNN (123 aa)) are 4H. The Cbl-PTB domain occupies 109–400 (TSLVNYIHYE…PDIFKSILSF (292 aa)). Residues 232–306 (NYNPYELLSN…FKLSVFIKWF (75 aa)) form an EF-hand-like region. Residues Asp-287, Thr-289, Asp-291, and Tyr-293 each contribute to the Ca(2+) site. Residues 307–400 (GALPVSLGIF…PDIFKSILSF (94 aa)) are SH2-like. Disordered stretches follow at residues 437-456 (ENNNNQNNNQNNNNNNINTF) and 467-609 (DSSN…NNNN). The segment covering 467–478 (DSSNSSDTNKSP) has biased composition (low complexity). The stretch at 479–544 (TKSRKSSFKN…NNNNNNNNNN (66 aa)) forms a coiled coil. A compositionally biased stretch (basic and acidic residues) spans 486 to 512 (FKNDKDKKEKEKEKGKDKEKEKERVSD). Low complexity-rich tracts occupy residues 530-561 (NNNNNNNNNNNNNNNNNNNNNNNNNNSSNNNN) and 571-609 (TSNGSSGNNNNNNNNNNNNNNNNNNNNSSSTTKRNNNNN). An RING-type zinc finger spans residues 618 to 653 (CTVCMDNEINTVFLECGHLSCCSLCSVKLKKCPICR).

Ubiquitinated.

Its subcellular location is the cytoplasm. It localises to the nucleus. It catalyses the reaction S-ubiquitinyl-[E2 ubiquitin-conjugating enzyme]-L-cysteine + [acceptor protein]-L-lysine = [E2 ubiquitin-conjugating enzyme]-L-cysteine + N(6)-ubiquitinyl-[acceptor protein]-L-lysine.. The protein operates within protein modification; protein ubiquitination. In terms of biological role, acts as an E3 ubiquitin-protein ligase, which accepts ubiquitin from specific E2 ubiquitin-conjugating enzymes, and then transfers it to substrates promoting their degradation by the proteasome. Up-regulates STATc tyrosine phosphorylation via an inhibitory effect on ptpC accumulation. Recognizes activated receptor tyrosine kinases, RTKs and terminates signaling. The sequence is that of E3 ubiquitin-protein ligase cblA (cblA-1) from Dictyostelium discoideum (Social amoeba).